A 309-amino-acid polypeptide reads, in one-letter code: D-allose kinase (309 aa).

ATP-binding positions include 10–17 (GVDMGATH) and 142–149 (GMGFAVWM).

Belongs to the ROK (NagC/XylR) family.

It catalyses the reaction D-allose + ATP = D-allose 6-phosphate + ADP + H(+). It functions in the pathway carbohydrate degradation; D-allose degradation. Functionally, catalyzes the phosphorylation of D-allose to D-allose 6-phosphate. Also has low level glucokinase activity in vitro. The polypeptide is D-allose kinase (Escherichia coli (strain K12)).